The primary structure comprises 1521 residues: Retroelement silencing factor 1 (1521 aa).

A Glycyl lysine isopeptide (Lys-Gly) (interchain with G-Cter in SUMO2) cross-link involves residue K223. Positions 621-640 (EKQHKPIQGDPDIADSSLGK) are disordered. Phosphoserine is present on S910. At T996 the chain carries Phosphothreonine. 2 stretches are compositionally biased toward polar residues: residues 1093 to 1105 (KNMPFSKQASQES) and 1124 to 1142 (LSSNTDPCRSNTSSVQSVS). Disordered stretches follow at residues 1093-1147 (KNMP…EKKK), 1204-1230 (ERASVQEKTVPSPESSDPKGSSSKSTR), and 1312-1335 (EASRTHSVSNNNKGKFDGKQPDKM). S1142 carries the phosphoserine modification. Residues 1214 to 1228 (PSPESSDPKGSSSKS) are compositionally biased toward low complexity. Basic and acidic residues predominate over residues 1325–1335 (GKFDGKQPDKM). K1411 is covalently cross-linked (Glycyl lysine isopeptide (Lys-Gly) (interchain with G-Cter in SUMO2)). Disordered regions lie at residues 1425–1444 (DKQDCPGPGPEKEQAPVQVS) and 1457–1485 (IPTRTKMPESSQRDSADSRLSKRSLSADE). Residues 1467-1476 (SQRDSADSRL) are compositionally biased toward basic and acidic residues. S1482 and S1514 each carry phosphoserine.

Interacts with SETDB1.

It localises to the nucleus. Functionally, plays a role in the regulation of imprinted gene expression, regulates repressive epigenetic modifications associated with SETDB1. Required for the recruitment or accumulation of SETDB1 to the endogenous retroviruses (ERVs) and maintenance of repressive chromatin configuration, contributing to a subset of the SETDB1-dependent ERV silencing in embryonic stem cells. This is Retroelement silencing factor 1 from Mus musculus (Mouse).